Consider the following 142-residue polypeptide: Large ribosomal subunit protein uL13 (142 aa).

Belongs to the universal ribosomal protein uL13 family. Part of the 50S ribosomal subunit.

This protein is one of the early assembly proteins of the 50S ribosomal subunit, although it is not seen to bind rRNA by itself. It is important during the early stages of 50S assembly. The sequence is that of Large ribosomal subunit protein uL13 from Xanthomonas campestris pv. campestris (strain ATCC 33913 / DSM 3586 / NCPPB 528 / LMG 568 / P 25).